Consider the following 506-residue polypeptide: Fe(3+)-transport system permease protein FbpB 2 (506 aa).

12 helical membrane-spanning segments follow: residues 9-29 (LTLLIILIGLPLCLPFLYVIL), 57-77 (LLMVCVTIGAISLGTFCAFLL), 90-110 (VAMTLPLCIPAFVSGFTWISL), 116-136 (VFWGTIGIMTLSSFPLAYLPV), 174-194 (IGSSILLIALHMLVEFGAVSI), 218-238 (ALLSAVLMAICILIVFGEIFF), 275-295 (IFILSIGVPVIMLIYWLIVGT), 314-334 (FIISGLGALLTVMCALPLVWA), 350-370 (PYLLHAVPGLVIALSLVYFSI), 379-399 (TFFVIIIAYFMLYLPMAQTTL), 428-448 (LTLPAILPGVAAAFALVFLNL), and 480-500 (AAATPYALMLVLFSGIPVFLL). Residues 52–233 (LSNTMLLMVC…LMAICILIVF (182 aa)) enclose the ABC transmembrane type-1 1 domain. Residues 310–500 (FSNSFIISGL…LFSGIPVFLL (191 aa)) enclose the ABC transmembrane type-1 2 domain.

Belongs to the binding-protein-dependent transport system permease family. FbpB subfamily. As to quaternary structure, the complex is composed of two ATP-binding proteins (FbpC), two transmembrane proteins (FbpB) and a solute-binding protein (FbpA).

It localises to the cell inner membrane. Its function is as follows. Part of the ABC transporter complex FbpABC (TC 3.A.1.10.1) involved in Fe(3+) ions import. Probably responsible for the translocation of the substrate across the membrane. The protein is Fe(3+)-transport system permease protein FbpB 2 (fbpB2) of Haemophilus influenzae (strain ATCC 51907 / DSM 11121 / KW20 / Rd).